The chain runs to 219 residues: 7-cyano-7-deazaguanine synthase 2 (219 aa).

Residue 8-18 participates in ATP binding; it reads YSGGMDSFTAL. Zn(2+) contacts are provided by C185, C193, C196, and C199.

This sequence belongs to the QueC family. Zn(2+) serves as cofactor.

It catalyses the reaction 7-carboxy-7-deazaguanine + NH4(+) + ATP = 7-cyano-7-deazaguanine + ADP + phosphate + H2O + H(+). The protein operates within purine metabolism; 7-cyano-7-deazaguanine biosynthesis. In terms of biological role, catalyzes the ATP-dependent conversion of 7-carboxy-7-deazaguanine (CDG) to 7-cyano-7-deazaguanine (preQ(0)). The protein is 7-cyano-7-deazaguanine synthase 2 of Colwellia psychrerythraea (strain 34H / ATCC BAA-681) (Vibrio psychroerythus).